A 125-amino-acid chain; its full sequence is Nascent polypeptide-associated complex protein (125 aa).

The 68-residue stretch at 9-76 folds into the NAC-A/B domain; that stretch reads PRMMKQMQKM…SKNTSKTAEK (68 aa).

It belongs to the NAC-alpha family. In terms of assembly, homodimer. Interacts with the ribosome. Binds ribosomal RNA.

In terms of biological role, contacts the emerging nascent chain on the ribosome. In Methanococcus vannielii (strain ATCC 35089 / DSM 1224 / JCM 13029 / OCM 148 / SB), this protein is Nascent polypeptide-associated complex protein.